Here is a 376-residue protein sequence, read N- to C-terminus: Actin-related protein T1 (376 aa).

The protein belongs to the actin family.

It is found in the cytoplasm. The protein resides in the cytoskeleton. Its subcellular location is the nucleus. The protein localises to the cytoplasmic vesicle. It localises to the secretory vesicle. It is found in the acrosome. Negatively regulates the Hedgehog (SHH) signaling. Binds to the promoter of the SHH signaling mediator, GLI1, and inhibits its expression. The protein is Actin-related protein T1 (Actrt1) of Rattus norvegicus (Rat).